A 271-amino-acid chain; its full sequence is Undecaprenyl-diphosphatase (271 aa).

8 consecutive transmembrane segments (helical) span residues 2-22, 42-62, 80-100, 108-128, 149-168, 175-195, 214-234, and 248-268; these read LLIL…FVPV, ANLF…VVYW, LRFW…GFSL, LFNP…MIIV, SIFV…SRSA, WIAG…AIPV, IEFI…LVVI, and IFAI…IFKI.

It belongs to the UppP family.

The protein localises to the cell membrane. It catalyses the reaction di-trans,octa-cis-undecaprenyl diphosphate + H2O = di-trans,octa-cis-undecaprenyl phosphate + phosphate + H(+). In terms of biological role, catalyzes the dephosphorylation of undecaprenyl diphosphate (UPP). Confers resistance to bacitracin. This chain is Undecaprenyl-diphosphatase, found in Clostridium tetani (strain Massachusetts / E88).